A 78-amino-acid chain; its full sequence is Large ribosomal subunit protein bL28 (78 aa).

The tract at residues 1-28 (MSRRCQVRGTKPEFGNNVSHSQRHTKRR) is disordered.

The protein belongs to the bacterial ribosomal protein bL28 family.

This chain is Large ribosomal subunit protein bL28, found in Cutibacterium acnes (strain DSM 16379 / KPA171202) (Propionibacterium acnes).